The following is a 215-amino-acid chain: Probable phosphoglycerate mutase GpmB (215 aa).

Residues 8–15, 21–22, Arg-58, Arg-60, 82–85, 104–105, and 151–152 contribute to the substrate site; these read RHGETQWN, QG, ELDM, RR, and GI. His-9 (tele-phosphohistidine intermediate) is an active-site residue. Glu-82 serves as the catalytic Proton donor/acceptor.

It belongs to the phosphoglycerate mutase family. GpmB subfamily.

The catalysed reaction is (2R)-2-phosphoglycerate = (2R)-3-phosphoglycerate. Its pathway is carbohydrate degradation; glycolysis; pyruvate from D-glyceraldehyde 3-phosphate: step 3/5. The protein is Probable phosphoglycerate mutase GpmB of Klebsiella pneumoniae (strain 342).